The sequence spans 263 residues: MSYLHAIILGIVEGITEFLPISSTGHMIIASSMMGIEDSSFTKAFEVIIQFGAIMSVLVLYWKRFLPHWGFYRKLFVAFLPTAIIGFVVKDVVEHLMGSVQVVAWSLIIGGVILIWADKAFAHLTMMGRKTDDLTYKDSVKLGLFQAIAMIPGVSRSGATIMGGLTLGMNKKEAAEFSFFLAVPTMAAATLYKLLKIYKTIEPAQINLLLVGCAVAFVVAMIAIKFFIGIVSRYGFRGFGYYRIVLGLVILILLYTGHDLQMV.

A run of 8 helical transmembrane segments spans residues 1–21, 41–61, 69–89, 96–116, 147–167, 177–197, 208–228, and 238–258; these read MSYLHAIILGIVEGITEFLPI, FTKAFEVIIQFGAIMSVLVLY, WGFYRKLFVAFLPTAIIGFVV, LMGSVQVVAWSLIIGGVILIW, AIAMIPGVSRSGATIMGGLTL, FSFFLAVPTMAAATLYKLLKI, LLLVGCAVAFVVAMIAIKFFI, and GFGYYRIVLGLVILILLYTGH.

It belongs to the UppP family.

Its subcellular location is the cell inner membrane. It catalyses the reaction di-trans,octa-cis-undecaprenyl diphosphate + H2O = di-trans,octa-cis-undecaprenyl phosphate + phosphate + H(+). Its function is as follows. Catalyzes the dephosphorylation of undecaprenyl diphosphate (UPP). Confers resistance to bacitracin. The protein is Undecaprenyl-diphosphatase of Bdellovibrio bacteriovorus (strain ATCC 15356 / DSM 50701 / NCIMB 9529 / HD100).